A 1177-amino-acid chain; its full sequence is Transcription-repair-coupling factor (1177 aa).

In terms of domain architecture, Helicase ATP-binding spans 638–799 (DMERERPMDR…MLGVRDLSVI (162 aa)). ATP is bound at residue 651–658 (GDVGYGKT). The DEEQ box motif lies at 752-755 (DEEQ). In terms of domain architecture, Helicase C-terminal spans 820-974 (LVREAIEREL…GFKIAMRDLT (155 aa)).

It in the N-terminal section; belongs to the UvrB family. In the C-terminal section; belongs to the helicase family. RecG subfamily.

The protein resides in the cytoplasm. Its function is as follows. Couples transcription and DNA repair by recognizing RNA polymerase (RNAP) stalled at DNA lesions. Mediates ATP-dependent release of RNAP and its truncated transcript from the DNA, and recruitment of nucleotide excision repair machinery to the damaged site. Probably required to repair non-bulky DNA lesions. The sequence is that of Transcription-repair-coupling factor from Bacillus subtilis (strain 168).